Consider the following 363-residue polypeptide: Phosphoserine aminotransferase (363 aa).

Arginine 42 is an L-glutamate binding site. Pyridoxal 5'-phosphate contacts are provided by residues 76–77, tryptophan 102, threonine 156, aspartate 175, and glutamine 198; that span reads GR. Position 199 is an N6-(pyridoxal phosphate)lysine (lysine 199). Position 240–241 (240–241) interacts with pyridoxal 5'-phosphate; the sequence is NT.

The protein belongs to the class-V pyridoxal-phosphate-dependent aminotransferase family. SerC subfamily. Homodimer. Pyridoxal 5'-phosphate serves as cofactor.

The protein resides in the cytoplasm. It catalyses the reaction O-phospho-L-serine + 2-oxoglutarate = 3-phosphooxypyruvate + L-glutamate. It carries out the reaction 4-(phosphooxy)-L-threonine + 2-oxoglutarate = (R)-3-hydroxy-2-oxo-4-phosphooxybutanoate + L-glutamate. It functions in the pathway amino-acid biosynthesis; L-serine biosynthesis; L-serine from 3-phospho-D-glycerate: step 2/3. Its pathway is cofactor biosynthesis; pyridoxine 5'-phosphate biosynthesis; pyridoxine 5'-phosphate from D-erythrose 4-phosphate: step 3/5. Catalyzes the reversible conversion of 3-phosphohydroxypyruvate to phosphoserine and of 3-hydroxy-2-oxo-4-phosphonooxybutanoate to phosphohydroxythreonine. The polypeptide is Phosphoserine aminotransferase (Shewanella piezotolerans (strain WP3 / JCM 13877)).